Reading from the N-terminus, the 1227-residue chain is Sterol 3-beta-glucosyltransferase (1227 aa).

Disordered stretches follow at residues 1–76 and 104–189; these read MLKG…AASP and QLAT…MTSK. Basic and acidic residues predominate over residues 48–57; it reads KHKEAERRLT. The segment covering 114–135 has biased composition (acidic residues); the sequence is AGADETEDEMDEAGDETGDDAD. The span at 154–171 shows a compositional bias: basic and acidic residues; it reads ESRRSTLFELSIEPHPES. Over residues 179 to 189 the composition is skewed to basic residues; that stretch reads TKNRRSRMTSK. The GRAM 1 domain maps to 188 to 229; the sequence is SKLRSKFNLDDDEELVREYPCWLLRDVLIQGHIYLTSRNLLF. A PH domain is found at 239-342; that stretch reads SARLTGNLSI…WSSALKKQVF (104 aa). Low complexity predominate over residues 449–469; the sequence is DAAIASEAAADAAAADTASHS. Disordered regions lie at residues 449–484 and 523–550; these read DAAI…RSTE and TLKL…LESR. One can recognise a GRAM 2 domain in the interval 602–668; that stretch reads KRFKAHFSLT…HDVENCYKEQ (67 aa). Residues Ser-786, Arg-787, Asp-789, Asn-1060, Asn-1088, Val-1089, His-1091, His-1104, Ser-1107, Gly-1108, Thr-1109, Asp-1128, and Gln-1129 each coordinate UDP-alpha-D-glucose.

The protein belongs to the glycosyltransferase 28 family.

It is found in the cytoplasm. The protein resides in the membrane. It catalyses the reaction a sterol + UDP-alpha-D-glucose = a sterol 3-beta-D-glucoside + UDP + H(+). It carries out the reaction ergosterol + UDP-alpha-D-glucose = ergosteryl 3-beta-D-glucoside + UDP + H(+). Functionally, sterol glycosyltransferase responsible for the glycosylation of ergosterol to form ergosterol-glucoside. This Eremothecium gossypii (strain ATCC 10895 / CBS 109.51 / FGSC 9923 / NRRL Y-1056) (Yeast) protein is Sterol 3-beta-glucosyltransferase.